Reading from the N-terminus, the 440-residue chain is Trigger factor (440 aa).

Residues 163–248 form the PPIase FKBP-type domain; it reads GDILTVDFLG…AKALKRRVAP (86 aa).

The protein belongs to the FKBP-type PPIase family. Tig subfamily.

The protein resides in the cytoplasm. It carries out the reaction [protein]-peptidylproline (omega=180) = [protein]-peptidylproline (omega=0). Involved in protein export. Acts as a chaperone by maintaining the newly synthesized protein in an open conformation. Functions as a peptidyl-prolyl cis-trans isomerase. This chain is Trigger factor, found in Acidiphilium cryptum (strain JF-5).